The primary structure comprises 1136 residues: Probable phospholipid-transporting ATPase IIB (1136 aa).

Residues 1 to 145 (MADQIPLYPV…IKNQKYNIFT (145 aa)) are Cytoplasmic-facing. A helical membrane pass occupies residues 146–166 (FIPGVLYEQFKFFLNLYFLIV). Residues 167-174 (SCSQFVPA) are Extracellular-facing. The chain crosses the membrane as a helical span at residues 175–195 (LKIGYLYTYWAPLGFVLAVTI). The Cytoplasmic segment spans residues 196–383 (MREAVDEFRR…LDLELNQLTK (188 aa)). A helical membrane pass occupies residues 384–404 (ALFLALVALSVVMVTLQGFAG). Topologically, residues 405-408 (PWYR) are extracellular. A helical membrane pass occupies residues 409 to 429 (SLFRFLLLFSYIIPISLRVNL). The Cytoplasmic segment spans residues 430–939 (DMGKAAYGWM…ALGQFVMHRG (510 aa)). Asp469 functions as the 4-aspartylphosphate intermediate in the catalytic mechanism. 3 residues coordinate ATP: Asp469, Lys470, and Thr471. Asp469 contributes to the Mg(2+) binding site. Residue Thr471 coordinates Mg(2+). A disordered region spans residues 514-538 (AGGSSAASTPPRKAPSSAPKVRRSV). ATP-binding residues include Glu591, Phe633, Lys638, Lys657, Arg686, Thr687, Thr766, Gly767, Asp768, Arg848, and Lys854. Asp874 is a Mg(2+) binding site. Asn877 and Asp878 together coordinate ATP. Asp878 serves as a coordination point for Mg(2+). Residues 940–960 (LIISTMQAVFSSVFYFASVPL) form a helical membrane-spanning segment. Topologically, residues 961-962 (YQ) are extracellular. Residues 963–983 (GFLMVGYATVYTMFPVFSLVL) traverse the membrane as a helical segment. Topologically, residues 984-1012 (DQDVKPEMAMLYPELYKDLTKGRSLSFKT) are cytoplasmic. A helical membrane pass occupies residues 1013–1033 (FLVWVLISIYQGGILMFGALV). Residues 1034-1041 (LFESEFVH) are Extracellular-facing. A helical membrane pass occupies residues 1042-1062 (VVAISFTALVLTELLMVALTV). Residues 1063–1066 (RTWH) are Cytoplasmic-facing. Residues 1067–1087 (WLMVVAQLLSLGCYVASLAFL) traverse the membrane as a helical segment. Over 1088–1098 (NEYFDVAFITT) the chain is Extracellular. A helical membrane pass occupies residues 1099-1119 (VTFVWKVSAITVVSCLPLYVL). Over 1120–1136 (KYLKRKLSPPSYSKLSS) the chain is Cytoplasmic.

Belongs to the cation transport ATPase (P-type) (TC 3.A.3) family. Type IV subfamily. It depends on Mg(2+) as a cofactor.

It is found in the golgi apparatus. Its subcellular location is the trans-Golgi network membrane. It carries out the reaction ATP + H2O + phospholipidSide 1 = ADP + phosphate + phospholipidSide 2.. The chain is Probable phospholipid-transporting ATPase IIB (ATP9B) from Bos taurus (Bovine).